The primary structure comprises 434 residues: Methylenetetrahydrofolate--tRNA-(uracil-5-)-methyltransferase TrmFO (434 aa).

10–15 (GAGLAG) lines the FAD pocket.

The protein belongs to the MnmG family. TrmFO subfamily. It depends on FAD as a cofactor.

It is found in the cytoplasm. It carries out the reaction uridine(54) in tRNA + (6R)-5,10-methylene-5,6,7,8-tetrahydrofolate + NADH + H(+) = 5-methyluridine(54) in tRNA + (6S)-5,6,7,8-tetrahydrofolate + NAD(+). It catalyses the reaction uridine(54) in tRNA + (6R)-5,10-methylene-5,6,7,8-tetrahydrofolate + NADPH + H(+) = 5-methyluridine(54) in tRNA + (6S)-5,6,7,8-tetrahydrofolate + NADP(+). In terms of biological role, catalyzes the folate-dependent formation of 5-methyl-uridine at position 54 (M-5-U54) in all tRNAs. This chain is Methylenetetrahydrofolate--tRNA-(uracil-5-)-methyltransferase TrmFO, found in Bacillus cytotoxicus (strain DSM 22905 / CIP 110041 / 391-98 / NVH 391-98).